A 290-amino-acid chain; its full sequence is 33 kDa chaperonin (290 aa).

2 disulfides stabilise this stretch: C234/C236 and C267/C270.

The protein belongs to the HSP33 family. Under oxidizing conditions two disulfide bonds are formed involving the reactive cysteines. Under reducing conditions zinc is bound to the reactive cysteines and the protein is inactive.

It localises to the cytoplasm. Redox regulated molecular chaperone. Protects both thermally unfolding and oxidatively damaged proteins from irreversible aggregation. Plays an important role in the bacterial defense system toward oxidative stress. The polypeptide is 33 kDa chaperonin (Colwellia psychrerythraea (strain 34H / ATCC BAA-681) (Vibrio psychroerythus)).